We begin with the raw amino-acid sequence, 605 residues long: YTH domain-containing protein ECT4 (605 aa).

Disordered stretches follow at residues 249–274 (GVAS…SNSH) and 357–384 (ELNR…QTFD). Residues 256–274 (KANNNVPATRNQNSSSNSH) are compositionally biased toward polar residues. Residues 368 to 383 (KATEEVSSEEVKKQTF) are compositionally biased toward basic and acidic residues. The YTH domain occupies 414–551 (AKFFIIKSYS…EQGLKVVKIF (138 aa)). Residues 420–422 (KSY), aspartate 426, 436–437 (WA), asparagine 469, tryptophan 493, tryptophan 498, and tryptophan 506 contribute to the RNA site. Residues 580–605 (KQQQSQKQVWEGKTNDEKPGTVDSTM) form a disordered region.

In terms of tissue distribution, expressed in the shoot apex, at the sites of leaf formation, and in emerging leaves.

The protein resides in the cytoplasm. Functionally, specifically recognizes and binds N6-methyladenosine (m6A)-containing RNAs, and regulates mRNA stability. M6A is a modification present at internal sites of mRNAs and some non-coding RNAs and plays a role in mRNA stability and processing. Required for the correct timing of leaf formation and normal leaf morphology. This chain is YTH domain-containing protein ECT4, found in Arabidopsis thaliana (Mouse-ear cress).